Reading from the N-terminus, the 829-residue chain is Periplasmic nitrate reductase (829 aa).

The segment at residues 1–30 is a signal peptide (tat-type signal); sequence MKLSRRDFMKANAVAAAAAVAGVSAPTLAA. The 4Fe-4S Mo/W bis-MGD-type domain maps to 41 to 97; sequence ITWDKAPCRFCGTGCSVLVGSQDGRVVATQGDPDAPVNRGLNCIKGYFLSKIMYGQD. Residues C48, C51, C55, and C83 each contribute to the [4Fe-4S] cluster site. Mo-bis(molybdopterin guanine dinucleotide) is bound by residues K85, Q152, N177, C181, 214–221, 245–249, 264–266, M374, Q378, N484, 510–511, K533, D560, and 719–728; these read WGSNMAEM, STFEH, QTD, SD, and TGRVLEHWHT. A substrate-binding site is contributed by F795. Positions 803 and 820 each coordinate Mo-bis(molybdopterin guanine dinucleotide).

It belongs to the prokaryotic molybdopterin-containing oxidoreductase family. NasA/NapA/NarB subfamily. As to quaternary structure, component of the periplasmic nitrate reductase NapAB complex composed of NapA and NapB. The cofactor is [4Fe-4S] cluster. Requires Mo-bis(molybdopterin guanine dinucleotide) as cofactor. Predicted to be exported by the Tat system. The position of the signal peptide cleavage has not been experimentally proven.

The protein resides in the periplasm. The enzyme catalyses 2 Fe(II)-[cytochrome] + nitrate + 2 H(+) = 2 Fe(III)-[cytochrome] + nitrite + H2O. Its function is as follows. Catalytic subunit of the periplasmic nitrate reductase complex NapAB. Receives electrons from NapB and catalyzes the reduction of nitrate to nitrite. This chain is Periplasmic nitrate reductase, found in Aeromonas hydrophila subsp. hydrophila (strain ATCC 7966 / DSM 30187 / BCRC 13018 / CCUG 14551 / JCM 1027 / KCTC 2358 / NCIMB 9240 / NCTC 8049).